Reading from the N-terminus, the 528-residue chain is Sphingosine-1-phosphate lyase (528 aa).

A helical membrane pass occupies residues 13–35 (PAKLVLATAGITAASILAYQAIT). The residue at position 324 (Lys324) is an N6-(pyridoxal phosphate)lysine.

It belongs to the group II decarboxylase family. Sphingosine-1-phosphate lyase subfamily. It depends on pyridoxal 5'-phosphate as a cofactor.

The protein resides in the endoplasmic reticulum membrane. It catalyses the reaction sphinganine 1-phosphate = hexadecanal + phosphoethanolamine. Its pathway is lipid metabolism; sphingolipid metabolism. Its function is as follows. Cleaves phosphorylated sphingoid bases (PSBs), such as sphingosine-1-phosphate, into fatty aldehydes and phosphoethanolamine. Sphingosine-1-phosphate (S1P) probably acts intracellularly as a second messenger perhaps by promoting cell proliferation; the absence of S1P lyase increases its concentration. This leads to increased lateral pseudopod formation as well as defects in the efficiency of chemotaxis. Overexpression of S1P lyase causes decreased growth rates, entry into stationary phase at lower cell density and increased sensitivity to the antitumor agents cisplatin and carboplatin; these effects are more pronounced in cells that express more enzyme. The polypeptide is Sphingosine-1-phosphate lyase (sglA) (Dictyostelium discoideum (Social amoeba)).